Reading from the N-terminus, the 200-residue chain is MIGRISSKTTALFICDIQTSFLKTVTQIEELIINNKSLMDSCLEFKIPIIMTQHDKNLFGEIVEPLRYSSSSSSSLSNVMVFDKIAYSMYTKELAQYVKENLPNLKSVILTGLESHVCVLQTALDLLENGYEVHVIDDATTSVQPKEYKSSLKRMKQSGVFLTSTETVIYQILQSDNHPKFKKIDELIVKRLFQINNINK.

This sequence belongs to the isochorismatase family.

This Dictyostelium discoideum (Social amoeba) protein is Isochorismatase family protein 2A.